We begin with the raw amino-acid sequence, 380 residues long: Putative glutamate--cysteine ligase 2 (380 aa).

It belongs to the glutamate--cysteine ligase type 2 family. YbdK subfamily.

The enzyme catalyses L-cysteine + L-glutamate + ATP = gamma-L-glutamyl-L-cysteine + ADP + phosphate + H(+). Functionally, ATP-dependent carboxylate-amine ligase which exhibits weak glutamate--cysteine ligase activity. The chain is Putative glutamate--cysteine ligase 2 from Pseudomonas entomophila (strain L48).